The chain runs to 160 residues: MPLFNPHDLRNLLQSGQRVLGLDPGSKTIGVALTDVSLMLASPLIGLKRRKLGENAQELAKIVRTQDVGALVVGLPLSLDGSFGPAARAASDWTQALSEKLGIPAGLWDERLSSSAVNRFLIKDADMTRGRRAEVVDKMAAAYMLQGWLDASRPEAPEIF.

It belongs to the YqgF nuclease family.

The protein resides in the cytoplasm. In terms of biological role, could be a nuclease involved in processing of the 5'-end of pre-16S rRNA. This chain is Putative pre-16S rRNA nuclease, found in Gluconobacter oxydans (strain 621H) (Gluconobacter suboxydans).